The chain runs to 127 residues: Protein translocase subunit SecE (127 aa).

Residues 1 to 19 (MSANTEAQGSGRGLEAMKW) are Cytoplasmic-facing. Residues 20–32 (VVVVALLLVAIVG) form a helical membrane-spanning segment. Over 33 to 48 (NYLYRDIMLPLRALAV) the chain is Periplasmic. A helical membrane pass occupies residues 49–60 (VILIAAAGGVAL). Residues 61–97 (LTTKGKATVAFAREARTEVRKVIWPTRQETLHTTLIV) lie on the Cytoplasmic side of the membrane. A helical transmembrane segment spans residues 98-115 (AAVTAVMSLILWGLDGIL). Over 116–127 (VRLVSFITGLRF) the chain is Periplasmic.

This sequence belongs to the SecE/SEC61-gamma family. Component of the Sec protein translocase complex. Heterotrimer consisting of SecY, SecE and SecG subunits. The heterotrimers can form oligomers, although 1 heterotrimer is thought to be able to translocate proteins. Interacts with the ribosome. Interacts with SecDF, and other proteins may be involved. Interacts with SecA.

The protein resides in the cell inner membrane. Its function is as follows. Essential subunit of the Sec protein translocation channel SecYEG. Clamps together the 2 halves of SecY. May contact the channel plug during translocation. This is Protein translocase subunit SecE from Escherichia coli O157:H7.